A 467-amino-acid chain; its full sequence is ATP synthase subunit beta (467 aa).

150-157 (GGAGVGKT) is an ATP binding site.

The protein belongs to the ATPase alpha/beta chains family. As to quaternary structure, F-type ATPases have 2 components, CF(1) - the catalytic core - and CF(0) - the membrane proton channel. CF(1) has five subunits: alpha(3), beta(3), gamma(1), delta(1), epsilon(1). CF(0) has three main subunits: a(1), b(2) and c(9-12). The alpha and beta chains form an alternating ring which encloses part of the gamma chain. CF(1) is attached to CF(0) by a central stalk formed by the gamma and epsilon chains, while a peripheral stalk is formed by the delta and b chains.

It is found in the cell inner membrane. The enzyme catalyses ATP + H2O + 4 H(+)(in) = ADP + phosphate + 5 H(+)(out). Functionally, produces ATP from ADP in the presence of a proton gradient across the membrane. The catalytic sites are hosted primarily by the beta subunits. This is ATP synthase subunit beta from Vibrio cholerae serotype O1 (strain ATCC 39541 / Classical Ogawa 395 / O395).